The chain runs to 449 residues: MSTVIENLGKLDRKVTLAVPKAEVEQEKQSRLARLSKTVKMSGFRPGKVPMKMVEKQYGQQVEMEVRFDKAARQFFDITNEQGVKVAGQPRFELKSEGVADDQFAFDATFEVYPEVKIGDLAGAELTRTKTEITDAEIDKTIDILRKQRVHYHPRGEAGDHGDGGEAVAQNGDRVTVDFVGTIDGVEFAGGKAEGFGFVLGEGRMLPEFEQATLGLKQGESKVFPLAFPADYHGKDVAGKTAEFTVTLKQVEWAHLPEINGAFAQSLGIADGSLDKMRADIRENLEREVKRRTHALLKDQVMDALLKVAELDVPKSLIEQDQERLVEMARRDLEARGMPNVKNMPIPAEMFAQQAERRVKLGLVLAEVVKVNALEAKPEQIKAEIEEFAKSYEDPKEVIRWYYGDQQRLAEMEAYVLENNVVNFVCDKAKVADKAMSFEELTATQGAQG.

The region spanning 172-257 (GDRVTVDFVG…LKQVEWAHLP (86 aa)) is the PPIase FKBP-type domain.

This sequence belongs to the FKBP-type PPIase family. Tig subfamily.

Its subcellular location is the cytoplasm. It catalyses the reaction [protein]-peptidylproline (omega=180) = [protein]-peptidylproline (omega=0). Its function is as follows. Involved in protein export. Acts as a chaperone by maintaining the newly synthesized protein in an open conformation. Functions as a peptidyl-prolyl cis-trans isomerase. In Ralstonia nicotianae (strain ATCC BAA-1114 / GMI1000) (Ralstonia solanacearum), this protein is Trigger factor.